Reading from the N-terminus, the 318-residue chain is NADH-ubiquinone oxidoreductase chain 1 (318 aa).

8 helical membrane-spanning segments follow: residues 2–22 (FMINIACLIIPILLAVAFLTL), 69–89 (LLFTVAPTLALTLALTMWLPL), 100–120 (LGVLFILAISSLAVYSILWSG), 146–166 (LAIILLSVLLMSGSFTLTNLI), 171–191 (HMWLIIPTWPLAMMWFISTLA), 231–251 (IMMMNALTTLLFLGALHTPLV), 253–273 (GIYTANFVLKTLILTIMFLWI), and 285–305 (LMHLLWKNFLPLTLAMLMWHV).

It belongs to the complex I subunit 1 family. In terms of assembly, core subunit of respiratory chain NADH dehydrogenase (Complex I) which is composed of 45 different subunits.

Its subcellular location is the mitochondrion inner membrane. The enzyme catalyses a ubiquinone + NADH + 5 H(+)(in) = a ubiquinol + NAD(+) + 4 H(+)(out). In terms of biological role, core subunit of the mitochondrial membrane respiratory chain NADH dehydrogenase (Complex I) which catalyzes electron transfer from NADH through the respiratory chain, using ubiquinone as an electron acceptor. Essential for the catalytic activity and assembly of complex I. The chain is NADH-ubiquinone oxidoreductase chain 1 (MT-ND1) from Myrmecophaga tridactyla (Giant anteater).